We begin with the raw amino-acid sequence, 431 residues long: Trigger factor (431 aa).

Positions Gly165–Pro250 constitute a PPIase FKBP-type domain.

It belongs to the FKBP-type PPIase family. Tig subfamily.

It is found in the cytoplasm. The catalysed reaction is [protein]-peptidylproline (omega=180) = [protein]-peptidylproline (omega=0). Its function is as follows. Involved in protein export. Acts as a chaperone by maintaining the newly synthesized protein in an open conformation. Functions as a peptidyl-prolyl cis-trans isomerase. The protein is Trigger factor of Leuconostoc citreum (strain KM20).